Consider the following 210-residue polypeptide: Thymidylate kinase (210 aa).

Gly11–Thr18 contacts ATP.

It belongs to the thymidylate kinase family.

It carries out the reaction dTMP + ATP = dTDP + ADP. Functionally, phosphorylation of dTMP to form dTDP in both de novo and salvage pathways of dTTP synthesis. The sequence is that of Thymidylate kinase (tmk) from Halalkalibacterium halodurans (strain ATCC BAA-125 / DSM 18197 / FERM 7344 / JCM 9153 / C-125) (Bacillus halodurans).